The chain runs to 457 residues: Phosphatidate cytidylyltransferase (457 aa).

A run of 6 helical transmembrane segments spans residues 71–91 (VMISGFFITLASGHAWCIVLI), 154–174 (FIVTNHKFICYCLYLMGFVLF), 188–208 (GSLCVTHMVLLLVVFQAHLII), 214–234 (GLFWFLLPCGLVIVNDIFAYL), 255–275 (GFLGAWFFTALASIILTRILS), and 330–350 (FHALNLATFASLFAPFGGFFA).

The protein belongs to the CDS family. As to quaternary structure, homodimer. The cofactor is Mg(2+).

It is found in the endoplasmic reticulum membrane. The protein resides in the cytoplasmic vesicle. It localises to the secretory vesicle. The enzyme catalyses a 1,2-diacyl-sn-glycero-3-phosphate + CTP + H(+) = a CDP-1,2-diacyl-sn-glycerol + diphosphate. It functions in the pathway phospholipid metabolism; CDP-diacylglycerol biosynthesis; CDP-diacylglycerol from sn-glycerol 3-phosphate: step 3/3. Its function is as follows. Supplies CDP-diacylglycerol, which may play an important role as both a precursor to phosphoinositide biosynthesis in the plasma membrane and as a negative effector of phosphatidylinositol 4-kinase activity, thereby exerting an effect on cell proliferation via a lipid-dependent signal transduction cascade. This chain is Phosphatidate cytidylyltransferase (CDS1), found in Saccharomyces cerevisiae (strain ATCC 204508 / S288c) (Baker's yeast).